A 338-amino-acid polypeptide reads, in one-letter code: Purple acid phosphatase 17 (338 aa).

A signal peptide spans 1–31 (MNSGRRSLMSATASLSLLLCIFTTFVVVSNG). D53 contributes to the Fe cation binding site. The N-linked (GlcNAc...) asparagine glycan is linked to N61. 2 residues coordinate Fe cation: D86 and Y89. Position 86 (D86) interacts with Zn(2+). Zn(2+) is bound by residues N124 and H218. The active-site Proton donor is H227. H253 is a binding site for Zn(2+). Substrate is bound at residue 253–255 (HDH). Residue H255 participates in Fe cation binding.

The protein belongs to the metallophosphoesterase superfamily. Purple acid phosphatase family. In terms of assembly, homodimer. The cofactor is Fe cation. It depends on Zn(2+) as a cofactor. In terms of tissue distribution, expressed in roots, stems, leaves, flowers and siliques.

It localises to the secreted. It catalyses the reaction a phosphate monoester + H2O = an alcohol + phosphate. The enzyme catalyses 2 a phenolic donor + H2O2 = 2 a phenolic radical donor + 2 H2O. Its activity is regulated as follows. Inhibited by phosphate and molybdate. Its function is as follows. Metallo-phosphoesterase involved in phosphate metabolism. Has a peroxidase activity. The polypeptide is Purple acid phosphatase 17 (PAP17) (Arabidopsis thaliana (Mouse-ear cress)).